A 162-amino-acid polypeptide reads, in one-letter code: NADH-quinone oxidoreductase subunit I (162 aa).

2 4Fe-4S ferredoxin-type domains span residues 54–83 (RRYENGEERCIACKLCEAVCPAMAITIESE) and 93–122 (TRYDIDLTKCIFCGFCEESCPVDSIVETQI). 8 residues coordinate [4Fe-4S] cluster: Cys-63, Cys-66, Cys-69, Cys-73, Cys-102, Cys-105, Cys-108, and Cys-112.

It belongs to the complex I 23 kDa subunit family. As to quaternary structure, NDH-1 is composed of 14 different subunits. Subunits NuoA, H, J, K, L, M, N constitute the membrane sector of the complex. Requires [4Fe-4S] cluster as cofactor.

Its subcellular location is the cell inner membrane. It catalyses the reaction a quinone + NADH + 5 H(+)(in) = a quinol + NAD(+) + 4 H(+)(out). NDH-1 shuttles electrons from NADH, via FMN and iron-sulfur (Fe-S) centers, to quinones in the respiratory chain. The immediate electron acceptor for the enzyme in this species is believed to be ubiquinone. Couples the redox reaction to proton translocation (for every two electrons transferred, four hydrogen ions are translocated across the cytoplasmic membrane), and thus conserves the redox energy in a proton gradient. The protein is NADH-quinone oxidoreductase subunit I of Burkholderia vietnamiensis (strain G4 / LMG 22486) (Burkholderia cepacia (strain R1808)).